A 630-amino-acid chain; its full sequence is WD repeat-containing protein 26 homolog (630 aa).

Residues 1–13 are compositionally biased toward low complexity; the sequence is MQSTSSTSSGSCS. Positions 1–90 are disordered; it reads MQSTSSTSSG…NNRENTSCSG (90 aa). Ser-36 and Ser-40 each carry phosphoserine. 2 stretches are compositionally biased toward polar residues: residues 48-57 and 66-75; these read PSGSSAATNG and IVNNNGSSSR. Residues 96-128 form the LisH domain; that stretch reads SNQEIIRLIGQYLHDVGLDKSVQTLMLESGCYL. Residues 129–190 enclose the CTLH domain; that stretch reads EHPSATKFRE…EHLDDGNPLD (62 aa). WD repeat units lie at residues 312–351, 359–400, 404–443, 445–482, 485–524, 529–569, and 572–612; these read DHCD…LTLK, QAQL…LVVK, SLED…VDSW, GVRV…SDFD, REPH…LVRR, RQSN…PLAK, and GHTK…SSAT. The interval 604–630 is disordered; it reads PKPNGSSATTESDDCSSSSSSSSWNMT. The span at 609–630 shows a compositional bias: low complexity; it reads SSATTESDDCSSSSSSSSWNMT.

The protein resides in the cytoplasm. Its subcellular location is the mitochondrion. Functionally, G-beta-like protein involved in cell signal transduction. The chain is WD repeat-containing protein 26 homolog from Drosophila melanogaster (Fruit fly).